The primary structure comprises 204 residues: Somatotropin (204 aa).

A signal peptide spans 1–17; that stretch reads MERAVLLLSLLSLGVSS. Gln18 is modified (pyrrolidone carboxylic acid). A Zn(2+)-binding site is contributed by His36. Cys69 and Cys177 are disulfide-bonded. Glu186 is a binding site for Zn(2+). An intrachain disulfide couples Cys194 to Cys202.

The protein belongs to the somatotropin/prolactin family.

Its subcellular location is the secreted. Functionally, growth hormone plays an important role in growth control and involved in the regulation of several anabolic processes. The sequence is that of Somatotropin (gh) from Perca flavescens (American yellow perch).